Here is a 129-residue protein sequence, read N- to C-terminus: Lysozyme C (129 aa).

The C-type lysozyme domain maps to Lys1–Leu129. 4 cysteine pairs are disulfide-bonded: Cys6–Cys127, Cys30–Cys115, Cys64–Cys80, and Cys76–Cys94. Residues Glu35 and Asp52 contribute to the active site.

It belongs to the glycosyl hydrolase 22 family. Monomer.

It localises to the secreted. The enzyme catalyses Hydrolysis of (1-&gt;4)-beta-linkages between N-acetylmuramic acid and N-acetyl-D-glucosamine residues in a peptidoglycan and between N-acetyl-D-glucosamine residues in chitodextrins.. In terms of biological role, lysozymes have primarily a bacteriolytic function; those in tissues and body fluids are associated with the monocyte-macrophage system and enhance the activity of immunoagents. In Pavo cristatus (Indian peafowl), this protein is Lysozyme C (LYZ).